The chain runs to 734 residues: Photosystem I P700 chlorophyll a apoprotein A2 (734 aa).

8 consecutive transmembrane segments (helical) span residues 46-69 (IFASHFGQLAIIFLWTSGNLFHVA), 135-158 (LYAGALFLLFLSVIFLIAGRLHLQ), 175-199 (LNHHLSGLFGVSSLAWTGHLVHVAI), 273-291 (MAHHHLAIAFVFSIAGHMY), 330-353 (LHFQLGLALASLGVITSLVAQHMY), 369-395 (AALYTHHQYIAGFIMTGAFAHGAIFLI), 417-439 (AIISHLSWVSLLLGFHTLGLYVH), and 517-535 (FLVHHAIALGLHTTTLILV). [4Fe-4S] cluster-binding residues include C559 and C568. A run of 2 helical transmembrane segments spans residues 575-596 (AFYLAVFWMLNTIGWVTFYWHW) and 643-665 (LSVWAWMFLFGHLVWATGFMFLI). Residues H654, M662, and Y670 each coordinate chlorophyll a. Residue W671 coordinates phylloquinone. Residues 707–727 (LVGLAHFSVGYIFTYAAFLIA) form a helical membrane-spanning segment.

It belongs to the PsaA/PsaB family. As to quaternary structure, the PsaA/B heterodimer binds the P700 chlorophyll special pair and subsequent electron acceptors. PSI consists of a core antenna complex that captures photons, and an electron transfer chain that converts photonic excitation into a charge separation. The eukaryotic PSI reaction center is composed of at least 11 subunits. The cofactor is P700 is a chlorophyll a/chlorophyll a' dimer, A0 is one or more chlorophyll a, A1 is one or both phylloquinones and FX is a shared 4Fe-4S iron-sulfur center..

It is found in the plastid. The protein resides in the chloroplast thylakoid membrane. It catalyses the reaction reduced [plastocyanin] + hnu + oxidized [2Fe-2S]-[ferredoxin] = oxidized [plastocyanin] + reduced [2Fe-2S]-[ferredoxin]. Its function is as follows. PsaA and PsaB bind P700, the primary electron donor of photosystem I (PSI), as well as the electron acceptors A0, A1 and FX. PSI is a plastocyanin-ferredoxin oxidoreductase, converting photonic excitation into a charge separation, which transfers an electron from the donor P700 chlorophyll pair to the spectroscopically characterized acceptors A0, A1, FX, FA and FB in turn. Oxidized P700 is reduced on the lumenal side of the thylakoid membrane by plastocyanin. This chain is Photosystem I P700 chlorophyll a apoprotein A2, found in Pinus koraiensis (Korean pine).